A 556-amino-acid chain; its full sequence is 2-succinyl-5-enolpyruvyl-6-hydroxy-3-cyclohexene-1-carboxylate synthase (556 aa).

It belongs to the TPP enzyme family. MenD subfamily. Homodimer. Mg(2+) serves as cofactor. Requires Mn(2+) as cofactor. It depends on thiamine diphosphate as a cofactor.

The enzyme catalyses isochorismate + 2-oxoglutarate + H(+) = 5-enolpyruvoyl-6-hydroxy-2-succinyl-cyclohex-3-ene-1-carboxylate + CO2. The protein operates within quinol/quinone metabolism; 1,4-dihydroxy-2-naphthoate biosynthesis; 1,4-dihydroxy-2-naphthoate from chorismate: step 2/7. It functions in the pathway quinol/quinone metabolism; menaquinone biosynthesis. In terms of biological role, catalyzes the thiamine diphosphate-dependent decarboxylation of 2-oxoglutarate and the subsequent addition of the resulting succinic semialdehyde-thiamine pyrophosphate anion to isochorismate to yield 2-succinyl-5-enolpyruvyl-6-hydroxy-3-cyclohexene-1-carboxylate (SEPHCHC). This Salmonella arizonae (strain ATCC BAA-731 / CDC346-86 / RSK2980) protein is 2-succinyl-5-enolpyruvyl-6-hydroxy-3-cyclohexene-1-carboxylate synthase.